The following is a 424-amino-acid chain: GTPase Obg (424 aa).

The region spanning 1-158 (MFIDTAKIFV…RWIKLELKLL (158 aa)) is the Obg domain. In terms of domain architecture, OBG-type G spans 159–331 (ADVGLIGFPN…LMKEAARLLS (173 aa)). GTP contacts are provided by residues 165 to 172 (GFPNVGKS), 190 to 194 (FTTLK), 212 to 215 (DIPG), 282 to 285 (NKSD), and 312 to 314 (SAA). Residues Ser172 and Thr192 each coordinate Mg(2+). The OCT domain occupies 345-424 (RFIEEEKRFT…LNDFEFDFLL (80 aa)).

This sequence belongs to the TRAFAC class OBG-HflX-like GTPase superfamily. OBG GTPase family. Monomer. Mg(2+) is required as a cofactor.

It is found in the cytoplasm. Functionally, an essential GTPase which binds GTP, GDP and possibly (p)ppGpp with moderate affinity, with high nucleotide exchange rates and a fairly low GTP hydrolysis rate. Plays a role in control of the cell cycle, stress response, ribosome biogenesis and in those bacteria that undergo differentiation, in morphogenesis control. The sequence is that of GTPase Obg from Clostridium botulinum (strain ATCC 19397 / Type A).